The primary structure comprises 497 residues: Carboxypeptidase Y homolog ARB_02032 (497 aa).

The signal sequence occupies residues 1-18; the sequence is MRFTQIVAAALCLGATEA. The N-linked (GlcNAc...) asparagine glycan is linked to asparagine 88. Serine 204 is a catalytic residue. Residues asparagine 263 and asparagine 393 are each glycosylated (N-linked (GlcNAc...) asparagine). Residue aspartate 403 is part of the active site. An N-linked (GlcNAc...) asparagine glycan is attached at asparagine 417. Residue histidine 469 is part of the active site.

This sequence belongs to the peptidase S10 family.

The protein localises to the secreted. It catalyses the reaction Release of a C-terminal amino acid with broad specificity.. Functionally, involved in degradation of small peptides. This Arthroderma benhamiae (strain ATCC MYA-4681 / CBS 112371) (Trichophyton mentagrophytes) protein is Carboxypeptidase Y homolog ARB_02032.